The following is a 708-amino-acid chain: Probable inactive lysine-specific demethylase JMJ19 (708 aa).

The segment at valine 35–lysine 59 is disordered. A compositionally biased stretch (polar residues) spans arginine 43–phenylalanine 54. The 42-residue stretch at alanine 108 to proline 149 folds into the JmjN domain. Residues serine 293–glutamine 454 form the JmjC domain. Residues cysteine 544, cysteine 547, cysteine 558, cysteine 560, cysteine 567, histidine 570, cysteine 575, and cysteine 577 each coordinate Zn(2+). An RING-type; degenerate zinc finger spans residues cysteine 544 to arginine 581. The Nuclear localization signal signature appears at threonine 646 to glycine 653. The segment covering alanine 678 to aspartate 694 has biased composition (basic and acidic residues). Residues alanine 678–glutamine 708 form a disordered region.

This sequence belongs to the JARID1 histone demethylase family. Expressed in inflorescences, roots, siliques, leaves and stems.

The protein localises to the nucleus. The sequence is that of Probable inactive lysine-specific demethylase JMJ19 from Arabidopsis thaliana (Mouse-ear cress).